Here is a 1468-residue protein sequence, read N- to C-terminus: MAKIALPRKFFGRRFEVLEPPYLLSIPKNSFENFVQLKVNPYKRKNVGLEHIFRTSFPFKDPDENFILEYLGYEIGDWECNRCGYKPKDDLLGGWDVDCPQCGAKLVYKEKFTPEECKLKGLTYSAPLRVMLQLKAKTKNGYREFPPKKVYFGEIPLMTETGSFIINGTERIIINQLIRSSGVFFDEKEEKQKDATITRILYRGSIIPDKGSRVEFELSGATDLISARIDRKKLSATAVLRAFGLETAYDILKYFYEDVRKFIVKDKYLYDAQTGEEFTPEDLEHHYIFAIIKFRGKLVGFASSKERDFIEERYIEEWEDLVRLLDDDRIEVLSVTAVPRDVVIKSPYGKSLIDTLANDTSPKDVDKRSPVKVPAEYTLRDYGLMEMYKRLRHIEAITMEIDSVIERARIFFNVFFRDLKRYDLSRVGRVKINAKVHRIPKVLKPADVDLLDQLPPLALAEDYGEYKAGTRVTKDLLKELFKQYKEIKVKDYTEDEARFILPIDLVNILKYLIDLRHGRVKKDDIAHLGNRRVRSVGELLENQARLGIAKMEKVFRDRSAVINPEQPDLKPQDFINPRYVTTAITDFLKTGQLSQYLDNTNPLSELTHKRRLSALGPGGLTRESAKFEIRDVHPSHYGRICPIETPEGQNIGLVTSPTVYARVNEYGFLITPYRKVENGKVTDKIEWLAAYEEENYVIAQSTPTDEEGRLKAEFILARHKNDIRLVKPEQVEYIDVSPRQVISPSSSLIPFLEHDDANRALMGSNMQRQAVPLIFTQAPLIGTGMEKKIARDSHAVVVAKRGGVVEEVDSSKIIIRVNPEEINFDDPLDIGIDIYELRKFQRTNQKTCVNQRPIVRKGEKVEKGQIIADGHSTDRGELALGKDVLVAFMPWRGYNFEDAIVISERLVKEDVYTSIHIEELEVEARETKVGEEEITRQIPGVPERALAHLDEHGIVRVGTYVKPGDILVGKVTPKGETRLTPEEKLLQAIFGEKTRDVKDASLRCPPGVEGIVIDVQVFTRKGTGKKDMLAEKVEREELEALEQELEKKKNLIITGRDKVLKGLVLGRKVEKDAKVGRKTVKKGTVIDEKVFEEFVNYILGRPENFFEDEDLIRKIREIAERTRTQIEMLNKVYEEKKETLLKRRDLPPGVITLVKVFIANKRKIKVGDKMAGRHGNKGVISVVLPVEDMPFLPDGTPVDIVLNPLGVPSRMNVGQILETHLGWAAKELGKKIGEMIEKGRDRKAITEYLKEIFAIGDKDGENAKFIEEFLNSLSEEEFWSVVRDYAERGIPMATPAFEGAEEDAIKELLKKAGLPENGKTTLYDGRTGEPFDFEVTVGYMHMLKLIHMVDDKIHARATGPYSLVTQQPLGGRAQFGGQRLGEMEVWALEAHGAAYTLQEMLTVKSDDVEGRTKVYEAIVKGKYTYTPGIPESFKVLVRELKALGLNVKCLNGEEKPCDEVEVKEEEEK.

This sequence belongs to the RNA polymerase beta chain family. The RNAP catalytic core consists of 2 alpha, 1 beta, 1 beta' and 1 omega subunit. When a sigma factor is associated with the core the holoenzyme is formed, which can initiate transcription.

It catalyses the reaction RNA(n) + a ribonucleoside 5'-triphosphate = RNA(n+1) + diphosphate. Its function is as follows. DNA-dependent RNA polymerase catalyzes the transcription of DNA into RNA using the four ribonucleoside triphosphates as substrates. The polypeptide is DNA-directed RNA polymerase subunit beta (Aquifex aeolicus (strain VF5)).